The primary structure comprises 581 residues: NADH-quinone oxidoreductase subunit C/D (581 aa).

The tract at residues 1–172 is NADH dehydrogenase I subunit C; sequence MSATDLVSEL…PLFNMTAALF (172 aa). The interval 196 to 581 is NADH dehydrogenase I subunit D; it reads ELMILNYGPH…IDYVMSDVDR (386 aa).

It in the N-terminal section; belongs to the complex I 30 kDa subunit family. This sequence in the C-terminal section; belongs to the complex I 49 kDa subunit family. NDH-1 is composed of 13 different subunits. Subunits NuoB, CD, E, F, and G constitute the peripheral sector of the complex.

It localises to the cell inner membrane. It catalyses the reaction a quinone + NADH + 5 H(+)(in) = a quinol + NAD(+) + 4 H(+)(out). In terms of biological role, NDH-1 shuttles electrons from NADH, via FMN and iron-sulfur (Fe-S) centers, to quinones in the respiratory chain. The immediate electron acceptor for the enzyme in this species is believed to be ubiquinone. Couples the redox reaction to proton translocation (for every two electrons transferred, four hydrogen ions are translocated across the cytoplasmic membrane), and thus conserves the redox energy in a proton gradient. This Rhodopseudomonas palustris (strain HaA2) protein is NADH-quinone oxidoreductase subunit C/D.